A 362-amino-acid chain; its full sequence is Alcohol dehydrogenase 13 (362 aa).

Zn(2+)-binding residues include Cys51, His73, Cys104, Cys107, Cys110, Cys118, and Cys168. His73 is a binding site for substrate. Residues 193-198 (GLGGLG) and 280-282 (VGA) each bind NAD(+).

The protein belongs to the zinc-containing alcohol dehydrogenase family. Class-III subfamily. Homodimer. Zn(2+) serves as cofactor.

The chain is Alcohol dehydrogenase 13 from Catharanthus roseus (Madagascar periwinkle).